A 162-amino-acid polypeptide reads, in one-letter code: NADH-quinone oxidoreductase subunit I (162 aa).

4Fe-4S ferredoxin-type domains follow at residues 53 to 83 and 93 to 122; these read LRRYPNGEERCIACKLCEAVCPAQAITIESE and TRYDIDMTKCIYCGFCQEACPVDAIVEGPN. Residues cysteine 63, cysteine 66, cysteine 69, cysteine 73, cysteine 102, cysteine 105, cysteine 108, and cysteine 112 each contribute to the [4Fe-4S] cluster site.

The protein belongs to the complex I 23 kDa subunit family. NDH-1 is composed of 14 different subunits. Subunits NuoA, H, J, K, L, M, N constitute the membrane sector of the complex. It depends on [4Fe-4S] cluster as a cofactor.

It localises to the cell inner membrane. The enzyme catalyses a quinone + NADH + 5 H(+)(in) = a quinol + NAD(+) + 4 H(+)(out). Its function is as follows. NDH-1 shuttles electrons from NADH, via FMN and iron-sulfur (Fe-S) centers, to quinones in the respiratory chain. The immediate electron acceptor for the enzyme in this species is believed to be ubiquinone. Couples the redox reaction to proton translocation (for every two electrons transferred, four hydrogen ions are translocated across the cytoplasmic membrane), and thus conserves the redox energy in a proton gradient. This is NADH-quinone oxidoreductase subunit I from Erythrobacter litoralis (strain HTCC2594).